A 103-amino-acid polypeptide reads, in one-letter code: Large ribosomal subunit protein bL21 (103 aa).

It belongs to the bacterial ribosomal protein bL21 family. In terms of assembly, part of the 50S ribosomal subunit. Contacts protein L20.

This protein binds to 23S rRNA in the presence of protein L20. The protein is Large ribosomal subunit protein bL21 of Brevibacillus brevis (strain 47 / JCM 6285 / NBRC 100599).